The sequence spans 131 residues: Small ribosomal subunit protein uS9 (131 aa).

The protein belongs to the universal ribosomal protein uS9 family.

This Actinobacillus pleuropneumoniae serotype 5b (strain L20) protein is Small ribosomal subunit protein uS9.